Consider the following 618-residue polypeptide: Phosphoenolpyruvate carboxykinase [GTP] (618 aa).

Substrate is bound by residues Arg-83 and 217–219 (YGG). Mn(2+)-binding residues include Lys-226 and His-245. Ser-267 is a binding site for substrate. 268–273 (MCGKTS) contacts GTP. The active site involves Cys-269. Asp-286 is a Mn(2+) binding site. Substrate is bound at residue 381-383 (NAR). Residues Arg-383 and Arg-415 each coordinate GTP.

The protein belongs to the phosphoenolpyruvate carboxykinase [GTP] family. Mn(2+) is required as a cofactor.

It is found in the cytoplasm. The catalysed reaction is oxaloacetate + GTP = phosphoenolpyruvate + GDP + CO2. The protein operates within carbohydrate biosynthesis; gluconeogenesis. In terms of biological role, catalyzes the conversion of oxaloacetate (OAA) to phosphoenolpyruvate (PEP), the rate-limiting step in the metabolic pathway that produces glucose from lactate and other precursors derived from the citric acid cycle. The chain is Phosphoenolpyruvate carboxykinase [GTP] from Pyrococcus abyssi (strain GE5 / Orsay).